A 225-amino-acid polypeptide reads, in one-letter code: Orotate phosphoribosyltransferase (225 aa).

5-phospho-alpha-D-ribose 1-diphosphate is bound by residues Lys26, 73-74 (YK), Arg100, Lys101, Lys104, His106, and 127-135 (EDVTTAGTS). 2 residues coordinate orotate: Thr131 and Arg160.

The protein belongs to the purine/pyrimidine phosphoribosyltransferase family. PyrE subfamily. As to quaternary structure, homodimer. Mg(2+) serves as cofactor.

It catalyses the reaction orotidine 5'-phosphate + diphosphate = orotate + 5-phospho-alpha-D-ribose 1-diphosphate. The protein operates within pyrimidine metabolism; UMP biosynthesis via de novo pathway; UMP from orotate: step 1/2. Catalyzes the transfer of a ribosyl phosphate group from 5-phosphoribose 1-diphosphate to orotate, leading to the formation of orotidine monophosphate (OMP). The sequence is that of Orotate phosphoribosyltransferase from Lachnoclostridium phytofermentans (strain ATCC 700394 / DSM 18823 / ISDg) (Clostridium phytofermentans).